Here is a 181-residue protein sequence, read N- to C-terminus: Inner membrane-spanning protein YciB (181 aa).

The next 5 helical transmembrane spans lie at 3 to 23 (FLFD…YGIY), 49 to 69 (TMLW…LILQ), 76 to 96 (WKPS…QAIF), 119 to 139 (VNAS…YVAF), and 149 to 169 (FKLF…GLML).

Belongs to the YciB family.

Its subcellular location is the cell inner membrane. Functionally, plays a role in cell envelope biogenesis, maintenance of cell envelope integrity and membrane homeostasis. The sequence is that of Inner membrane-spanning protein YciB from Nitrosospira multiformis (strain ATCC 25196 / NCIMB 11849 / C 71).